The primary structure comprises 216 residues: MOB kinase activator-like 1 homolog B (216 aa).

Zn(2+) contacts are provided by cysteine 79, cysteine 84, histidine 161, and histidine 166.

It belongs to the MOB1/phocein family.

This chain is MOB kinase activator-like 1 homolog B (mobB), found in Dictyostelium discoideum (Social amoeba).